The primary structure comprises 549 residues: Undecaprenyl phosphate-alpha-4-amino-4-deoxy-L-arabinose arabinosyl transferase (549 aa).

12 helical membrane-spanning segments follow: residues 9 to 29 (LLLI…GLWI), 80 to 100 (LFGV…LAYL), 112 to 132 (SLAC…SGYA), 136 to 156 (PQFT…LDAG), 176 to 196 (FLTK…PYML), 204 to 224 (LLGY…PWAL), 256 to 276 (PWWF…GLLP), 288 to 308 (QAPV…FSLS), 312 to 332 (LPTY…HALV), 346 to 366 (NGLL…YLQL), 376 to 396 (FELF…LAQW), and 402 to 422 (AWAA…AAMP).

Belongs to the glycosyltransferase 83 family.

The protein resides in the cell inner membrane. It catalyses the reaction 4-amino-4-deoxy-alpha-L-arabinopyranosyl di-trans,octa-cis-undecaprenyl phosphate + lipid IVA = lipid IIA + di-trans,octa-cis-undecaprenyl phosphate.. Its pathway is lipopolysaccharide metabolism; 4-amino-4-deoxy-beta-L-arabinose-lipid A biosynthesis. Functionally, catalyzes the transfer of the L-Ara4N moiety of the glycolipid undecaprenyl phosphate-alpha-L-Ara4N to lipid A. The modified arabinose is attached to lipid A and is required for resistance to polymyxin and cationic antimicrobial peptides. In Pseudomonas aeruginosa (strain ATCC 15692 / DSM 22644 / CIP 104116 / JCM 14847 / LMG 12228 / 1C / PRS 101 / PAO1), this protein is Undecaprenyl phosphate-alpha-4-amino-4-deoxy-L-arabinose arabinosyl transferase.